The following is a 226-amino-acid chain: V-type proton ATPase subunit E 2 (226 aa).

It belongs to the V-ATPase E subunit family. As to quaternary structure, V-ATPase is a heteromultimeric enzyme made up of two complexes: the ATP-hydrolytic V1 complex and the proton translocation V0 complex. The V1 complex consists of three catalytic AB heterodimers that form a heterohexamer, three peripheral stalks each consisting of EG heterodimers, one central rotor including subunits D and F, and the regulatory subunits C and H. The proton translocation complex V0 consists of the proton transport subunit a, a ring of proteolipid subunits c9c'', rotary subunit d, subunits e and f, and the accessory subunits ATP6AP1/Ac45 and ATP6AP2/PRR. Testis specific.

Its function is as follows. Subunit of the V1 complex of vacuolar(H+)-ATPase (V-ATPase), a multisubunit enzyme composed of a peripheral complex (V1) that hydrolyzes ATP and a membrane integral complex (V0) that translocates protons. V-ATPase is responsible for acidifying and maintaining the pH of intracellular compartments and in some cell types, is targeted to the plasma membrane, where it is responsible for acidifying the extracellular environment. This chain is V-type proton ATPase subunit E 2 (Atp6v1e2), found in Mus musculus (Mouse).